The chain runs to 155 residues: Regulatory protein RecX (155 aa).

It belongs to the RecX family.

It is found in the cytoplasm. Its function is as follows. Modulates RecA activity. The polypeptide is Regulatory protein RecX (Vibrio campbellii (strain ATCC BAA-1116)).